A 655-amino-acid chain; its full sequence is Very long-chain specific acyl-CoA dehydrogenase, mitochondrial (655 aa).

A mitochondrion-targeting transit peptide spans 1-40 (MQSARMTPSVGRQLLRLGARSSRSAALQGQPRPTSAQRLY). Residues 1-70 (MQSARMTPSV…TREKPARAES (70 aa)) are disordered. The span at 21-37 (SSRSAALQGQPRPTSAQ) shows a compositional bias: polar residues. The interval 41–482 (ASEATQAVLE…ALQGCMDKGK (442 aa)) is catalytic. An N6-acetyllysine modification is found at Lys51. The segment covering 60–70 (STREKPARAES) has biased composition (basic and acidic residues). Lys71 and Lys127 each carry N6-acetyllysine; alternate. N6-succinyllysine; alternate is present on residues Lys71 and Lys127. Lys195 is modified (N6-succinyllysine). Residue 214–223 (FCLTEPSSGS) coordinates FAD. Residue Cys237 is modified to S-nitrosocysteine. Residue Lys239 is modified to N6-acetyllysine; alternate. Lys239 carries the N6-succinyllysine; alternate modification. FAD is bound at residue 249–251 (WIS). Lys268 is modified (N6-succinyllysine). Residues Lys276 and Lys278 each carry the N6-acetyllysine; alternate modification. Lys276 and Lys278 each carry N6-succinyllysine; alternate. An N6-acetyllysine mark is found at Lys298 and Lys316. Lys331 carries the post-translational modification N6-acetyllysine; alternate. N6-succinyllysine; alternate is present on Lys331. Position 372 is an N6-succinyllysine (Lys372). Position 461-463 (461-463 (FEG)) interacts with substrate. Residue Glu462 is the Proton acceptor of the active site. 464–466 (TND) is an FAD binding site. Lys482 is subject to N6-acetyllysine; alternate. Lys482 carries the N6-succinyllysine; alternate modification. A membrane-anchoring region spans residues 483 to 516 (ELTGLGNALKNPLGNVGLLIGEASKQLRRRTGIG). A phosphoserine mark is found at Ser517 and Ser522. Lys550 bears the N6-acetyllysine mark. Lys556 carries the post-translational modification N6-acetyllysine; alternate. An N6-succinyllysine; alternate modification is found at Lys556. FAD is bound at residue Gln562. Position 639 is an N6-succinyllysine (Lys639).

Belongs to the acyl-CoA dehydrogenase family. As to quaternary structure, homodimer. Homodimerizes after import into the mitochondrion. FAD serves as cofactor. In terms of processing, S-nitrosylation at Cys-237 in liver improves catalytic efficiency. In terms of tissue distribution, widely expressed (at protein level).

The protein resides in the mitochondrion inner membrane. It carries out the reaction a very-long-chain 2,3-saturated fatty acyl-CoA + oxidized [electron-transfer flavoprotein] + H(+) = a very-long-chain (2E)-enoyl-CoA + reduced [electron-transfer flavoprotein]. It catalyses the reaction dodecanoyl-CoA + oxidized [electron-transfer flavoprotein] + H(+) = (2E)-dodecenoyl-CoA + reduced [electron-transfer flavoprotein]. The enzyme catalyses tetradecanoyl-CoA + oxidized [electron-transfer flavoprotein] + H(+) = (2E)-tetradecenoyl-CoA + reduced [electron-transfer flavoprotein]. The catalysed reaction is oxidized [electron-transfer flavoprotein] + hexadecanoyl-CoA + H(+) = (2E)-hexadecenoyl-CoA + reduced [electron-transfer flavoprotein]. It carries out the reaction octadecanoyl-CoA + oxidized [electron-transfer flavoprotein] + H(+) = (2E)-octadecenoyl-CoA + reduced [electron-transfer flavoprotein]. It catalyses the reaction eicosanoyl-CoA + oxidized [electron-transfer flavoprotein] + H(+) = (2E)-eicosenoyl-CoA + reduced [electron-transfer flavoprotein]. The enzyme catalyses docosanoyl-CoA + oxidized [electron-transfer flavoprotein] + H(+) = (2E)-docosenoyl-CoA + reduced [electron-transfer flavoprotein]. The catalysed reaction is tetracosanoyl-CoA + oxidized [electron-transfer flavoprotein] + H(+) = (2E)-tetracosenoyl-CoA + reduced [electron-transfer flavoprotein]. Its pathway is lipid metabolism; mitochondrial fatty acid beta-oxidation. Functionally, very long-chain specific acyl-CoA dehydrogenase is one of the acyl-CoA dehydrogenases that catalyze the first step of mitochondrial fatty acid beta-oxidation, an aerobic process breaking down fatty acids into acetyl-CoA and allowing the production of energy from fats. The first step of fatty acid beta-oxidation consists in the removal of one hydrogen from C-2 and C-3 of the straight-chain fatty acyl-CoA thioester, resulting in the formation of trans-2-enoyl-CoA. Among the different mitochondrial acyl-CoA dehydrogenases, very long-chain specific acyl-CoA dehydrogenase acts specifically on acyl-CoAs with saturated 12 to 24 carbons long primary chains. This is Very long-chain specific acyl-CoA dehydrogenase, mitochondrial from Rattus norvegicus (Rat).